Consider the following 545-residue polypeptide: Glucose-6-phosphate isomerase 1 (545 aa).

Residue glutamate 356 is the Proton donor of the active site. Catalysis depends on residues histidine 387 and lysine 508.

This sequence belongs to the GPI family.

It is found in the cytoplasm. The catalysed reaction is alpha-D-glucose 6-phosphate = beta-D-fructose 6-phosphate. Its pathway is carbohydrate biosynthesis; gluconeogenesis. It functions in the pathway carbohydrate degradation; glycolysis; D-glyceraldehyde 3-phosphate and glycerone phosphate from D-glucose: step 2/4. In terms of biological role, catalyzes the reversible isomerization of glucose-6-phosphate to fructose-6-phosphate. In Cupriavidus pinatubonensis (strain JMP 134 / LMG 1197) (Cupriavidus necator (strain JMP 134)), this protein is Glucose-6-phosphate isomerase 1.